A 131-amino-acid polypeptide reads, in one-letter code: Small ribosomal subunit protein uS8 (131 aa).

This sequence belongs to the universal ribosomal protein uS8 family. Part of the 30S ribosomal subunit. Contacts proteins S5 and S12.

Functionally, one of the primary rRNA binding proteins, it binds directly to 16S rRNA central domain where it helps coordinate assembly of the platform of the 30S subunit. The sequence is that of Small ribosomal subunit protein uS8 from Azoarcus sp. (strain BH72).